Reading from the N-terminus, the 595-residue chain is NADH-quinone oxidoreductase subunit C/D (595 aa).

Residues 1–186 are NADH dehydrogenase I subunit C; sequence MAETDIAMPE…TPYMQDKAKQ (186 aa). The NADH dehydrogenase I subunit D stretch occupies residues 210–595; it reads DFMFLNLGPN…IDVVMADVDR (386 aa).

This sequence in the N-terminal section; belongs to the complex I 30 kDa subunit family. In the C-terminal section; belongs to the complex I 49 kDa subunit family. NDH-1 is composed of 13 different subunits. Subunits NuoB, CD, E, F, and G constitute the peripheral sector of the complex.

It localises to the cell inner membrane. It catalyses the reaction a quinone + NADH + 5 H(+)(in) = a quinol + NAD(+) + 4 H(+)(out). In terms of biological role, NDH-1 shuttles electrons from NADH, via FMN and iron-sulfur (Fe-S) centers, to quinones in the respiratory chain. The immediate electron acceptor for the enzyme in this species is believed to be ubiquinone. Couples the redox reaction to proton translocation (for every two electrons transferred, four hydrogen ions are translocated across the cytoplasmic membrane), and thus conserves the redox energy in a proton gradient. The chain is NADH-quinone oxidoreductase subunit C/D from Acinetobacter baumannii (strain AYE).